The chain runs to 556 residues: Putative cysteine ligase BshC (556 aa).

Coiled-coil stretches lie at residues 408–442 (ILQKHELTLDDAFHRLDDLRQELLEREDRLGIAQA) and 468–513 (LGQV…ANLT).

Belongs to the BshC family.

Functionally, involved in bacillithiol (BSH) biosynthesis. May catalyze the last step of the pathway, the addition of cysteine to glucosamine malate (GlcN-Mal) to generate BSH. The protein is Putative cysteine ligase BshC of Symbiobacterium thermophilum (strain DSM 24528 / JCM 14929 / IAM 14863 / T).